Here is a 249-residue protein sequence, read N- to C-terminus: Methionine aminopeptidase (249 aa).

H77 is a substrate binding site. D94, D105, and H168 together coordinate a divalent metal cation. Residue H175 coordinates substrate. A divalent metal cation is bound by residues E201 and E232.

It belongs to the peptidase M24A family. Methionine aminopeptidase type 1 subfamily. Monomer. The cofactor is Co(2+). Requires Zn(2+) as cofactor. Mn(2+) is required as a cofactor. It depends on Fe(2+) as a cofactor.

The catalysed reaction is Release of N-terminal amino acids, preferentially methionine, from peptides and arylamides.. Functionally, removes the N-terminal methionine from nascent proteins. The N-terminal methionine is often cleaved when the second residue in the primary sequence is small and uncharged (Met-Ala-, Cys, Gly, Pro, Ser, Thr, or Val). Requires deformylation of the N(alpha)-formylated initiator methionine before it can be hydrolyzed. This chain is Methionine aminopeptidase, found in Clostridium perfringens (strain 13 / Type A).